The sequence spans 186 residues: Putative transcriptional regulator encoded by LINC00473 (186 aa).

The disordered stretch occupies residues 1–62 (MELSAAAGRR…RDCTPTCTNA (62 aa)). Residues 18–40 (FTGRHRTERSQERGSTPRKERSM) show a composition bias toward basic and acidic residues.

Its function is as follows. May play a role in cAMP-mediated gene transcription. In Homo sapiens (Human), this protein is Putative transcriptional regulator encoded by LINC00473 (LINC00473).